A 281-amino-acid chain; its full sequence is CMT1A duplicated region transcript 15 protein-like protein (281 aa).

2 disordered regions span residues 107–131 and 150–187; these read KPAWEEPPPERALEVEGAPAKDQPS and AENVAGERSGREGVTSTAPASRSHAAPSPGHGGKHGGG. Positions 108–120 are enriched in basic and acidic residues; sequence PAWEEPPPERALE. Residues 165–178 show a composition bias toward low complexity; that stretch reads STAPASRSHAAPSP. Residues 207-227 traverse the membrane as a helical segment; sequence AGTTALLLQGLFIVLILVGYI.

The protein localises to the membrane. This is CMT1A duplicated region transcript 15 protein-like protein (CDRT15L2) from Homo sapiens (Human).